The following is a 1050-amino-acid chain: Bifunctional glutamine synthetase adenylyltransferase/adenylyl-removing enzyme (1050 aa).

An adenylyl removase region spans residues 1–531; sequence MTDPLIHTRK…LHSQLFYRPL (531 aa). The tract at residues 537–1050 is adenylyl transferase; that stretch reads NLSVDAMKLS…LDSVEARREL (514 aa).

This sequence belongs to the GlnE family. It depends on Mg(2+) as a cofactor.

The enzyme catalyses [glutamine synthetase]-O(4)-(5'-adenylyl)-L-tyrosine + phosphate = [glutamine synthetase]-L-tyrosine + ADP. It carries out the reaction [glutamine synthetase]-L-tyrosine + ATP = [glutamine synthetase]-O(4)-(5'-adenylyl)-L-tyrosine + diphosphate. Functionally, involved in the regulation of glutamine synthetase GlnA, a key enzyme in the process to assimilate ammonia. When cellular nitrogen levels are high, the C-terminal adenylyl transferase (AT) inactivates GlnA by covalent transfer of an adenylyl group from ATP to specific tyrosine residue of GlnA, thus reducing its activity. Conversely, when nitrogen levels are low, the N-terminal adenylyl removase (AR) activates GlnA by removing the adenylyl group by phosphorolysis, increasing its activity. The regulatory region of GlnE binds the signal transduction protein PII (GlnB) which indicates the nitrogen status of the cell. In Corynebacterium efficiens (strain DSM 44549 / YS-314 / AJ 12310 / JCM 11189 / NBRC 100395), this protein is Bifunctional glutamine synthetase adenylyltransferase/adenylyl-removing enzyme.